Here is a 267-residue protein sequence, read N- to C-terminus: 4-hydroxy-tetrahydrodipicolinate reductase (267 aa).

10-15 provides a ligand contact to NAD(+); that stretch reads GCLGKQ. NADP(+) is bound at residue R37. Residues 99–101 and 122–125 contribute to the NAD(+) site; these read GTT and TTNV. The active-site Proton donor/acceptor is the H154. Residue H155 participates in (S)-2,3,4,5-tetrahydrodipicolinate binding. K158 (proton donor) is an active-site residue. 164-165 is a (S)-2,3,4,5-tetrahydrodipicolinate binding site; the sequence is GT.

The protein belongs to the DapB family.

The protein resides in the cytoplasm. The catalysed reaction is (S)-2,3,4,5-tetrahydrodipicolinate + NAD(+) + H2O = (2S,4S)-4-hydroxy-2,3,4,5-tetrahydrodipicolinate + NADH + H(+). The enzyme catalyses (S)-2,3,4,5-tetrahydrodipicolinate + NADP(+) + H2O = (2S,4S)-4-hydroxy-2,3,4,5-tetrahydrodipicolinate + NADPH + H(+). Its pathway is amino-acid biosynthesis; L-lysine biosynthesis via DAP pathway; (S)-tetrahydrodipicolinate from L-aspartate: step 4/4. Its function is as follows. Catalyzes the conversion of 4-hydroxy-tetrahydrodipicolinate (HTPA) to tetrahydrodipicolinate. This Ehrlichia chaffeensis (strain ATCC CRL-10679 / Arkansas) protein is 4-hydroxy-tetrahydrodipicolinate reductase.